A 148-amino-acid polypeptide reads, in one-letter code: Protein Turandot Z (148 aa).

A signal peptide spans 1 to 23 (MYFAIRLSFVLAVLFCLTGNGSA).

Belongs to the Turandot family.

The protein resides in the secreted. A humoral factor that may play a role in stress tolerance. In Drosophila simulans (Fruit fly), this protein is Protein Turandot Z.